Reading from the N-terminus, the 235-residue chain is Large ribosomal subunit protein uL3 (235 aa).

Residues 138–157 (SVSHRSHGSTGGRQDPGKTF) form a disordered region. Q151 carries the post-translational modification N5-methylglutamine.

The protein belongs to the universal ribosomal protein uL3 family. As to quaternary structure, part of the 50S ribosomal subunit. Forms a cluster with proteins L14 and L19. Post-translationally, methylated by PrmB.

In terms of biological role, one of the primary rRNA binding proteins, it binds directly near the 3'-end of the 23S rRNA, where it nucleates assembly of the 50S subunit. This chain is Large ribosomal subunit protein uL3, found in Rhodospirillum centenum (strain ATCC 51521 / SW).